The following is a 537-amino-acid chain: Beta-hexosaminidase subunit beta (537 aa).

The N-terminal stretch at 1 to 23 is a signal peptide; it reads MPGSPRRAPGLLLQALVAMVSLA. N-linked (GlcNAc...) asparagine glycosylation occurs at asparagine 62. Cysteine 69 and cysteine 115 are joined by a disulfide. 2 N-linked (GlcNAc...) asparagine glycosylation sites follow: asparagine 168 and asparagine 305. 2 cysteine pairs are disulfide-bonded: cysteine 287-cysteine 338 and cysteine 512-cysteine 529. Residue glutamate 333 is the Proton donor of the active site.

It belongs to the glycosyl hydrolase 20 family. As to quaternary structure, there are 3 forms of beta-hexosaminidase: hexosaminidase A is a heterodimer composed of one subunit alpha and one subunit beta (chain A and B); hexosaminidase B is a homodimer of two beta subunits (two chains A and B); hexosaminidase S is a homodimer of two alpha subunits. The composition of the dimer (isozyme A versus isozyme S) has a significant effect on the substrate specificity of the alpha subunit active site.

The protein resides in the lysosome. Its subcellular location is the cytoplasmic vesicle. It localises to the secretory vesicle. The protein localises to the cortical granule. The catalysed reaction is Hydrolysis of terminal non-reducing N-acetyl-D-hexosamine residues in N-acetyl-beta-D-hexosaminides.. The enzyme catalyses N-acetyl-beta-D-galactosaminyl-(1-&gt;4)-beta-D-3-sulfogalactosyl-(1-&gt;4)-beta-D-glucosyl-(1&lt;-&gt;1')-ceramide + H2O = a beta-D-3-sulfogalactosyl-(1-&gt;4)-beta-D-glucosyl-(1&lt;-&gt;1')-ceramide + N-acetyl-beta-D-galactosamine. It catalyses the reaction a ganglioside GM2 (d18:1(4E)) + H2O = a ganglioside GM3 (d18:1(4E)) + N-acetyl-beta-D-galactosamine. It carries out the reaction a ganglioside GM2 + H2O = a ganglioside GM3 + N-acetyl-beta-D-galactosamine. The catalysed reaction is beta-D-GalNAc-(1-&gt;4)-alpha-L-IdoA-(1-&gt;3)-beta-D-GalNAc-4-sulfate-(1-&gt;4)-alpha-L-IdoA-(1-&gt;3)-D-GalNAc-4-sulfate + H2O = alpha-L-IdoA-(1-&gt;3)-beta-D-GalNAc-4-sulfate-(1-&gt;4)-alpha-L-IdoA-(1-&gt;3)-D-GalNAc-4-sulfate + N-acetyl-D-galactosamine. The enzyme catalyses N-acetyl-beta-D-6-sulfogalactosaminyl-(1-&gt;4)-alpha-L-iduronyl-(1-&gt;3)-N-acetyl-D-6-sulfogalactosamine + H2O = alpha-L-iduronyl-(1-&gt;3)-N-acetyl-D-6-sulfogalactosamine + N-acetyl-D-6-sulfogalactosamine. With respect to regulation, addition of GM2A stimulates the hydrolysis of sulfated glycosphingolipid SM2 and the ganglioside GM2. Hydrolyzes the non-reducing end N-acetyl-D-hexosamine and/or sulfated N-acetyl-D-hexosamine of glycoconjugates, such as the oligosaccharide moieties from proteins and neutral glycolipids, or from certain mucopolysaccharides. The isozyme B does not hydrolyze each of these substrates, however hydrolyzes efficiently neutral oligosaccharide. Only the isozyme A is responsible for the degradation of GM2 gangliosides in the presence of GM2A. During fertilization is responsible, at least in part, for the zona block to polyspermy. Present in the cortical granules of non-activated oocytes, is exocytosed during the cortical reaction in response to oocyte activation and inactivates the sperm galactosyltransferase-binding site, accounting for the block in sperm binding to the zona pellucida. This is Beta-hexosaminidase subunit beta from Rattus norvegicus (Rat).